The chain runs to 147 residues: Deoxyuridine 5'-triphosphate nucleotidohydrolase (147 aa).

R24 contributes to the Mg(2+) binding site. DUTP is bound by residues 68-70 (PRS), 82-85 (GVID), Y88, G93, I95, and R111.

The protein belongs to the dUTPase family. Mg(2+) serves as cofactor.

It catalyses the reaction dUTP + H2O = dUMP + diphosphate + H(+). This enzyme is involved in nucleotide metabolism: it produces dUMP, the immediate precursor of thymidine nucleotides and it decreases the intracellular concentration of dUTP so that uracil cannot be incorporated into DNA. This chain is Deoxyuridine 5'-triphosphate nucleotidohydrolase (OPG046), found in Homo sapiens (Human).